We begin with the raw amino-acid sequence, 181 residues long: Putative ankyrin repeat protein RBE_0150 (181 aa).

4 ANK repeats span residues 50-79 (IGQK…KLGT), 83-114 (LGRT…DINA), 118-147 (SGST…DYFT), and 151-180 (LGQT…AGYY).

This is Putative ankyrin repeat protein RBE_0150 from Rickettsia bellii (strain RML369-C).